The sequence spans 131 residues: Methylglyoxal synthase (131 aa).

Residues 1 to 131 enclose the MGS-like domain; it reads MKIALIAHDK…GDLDYRKLRK (131 aa). Residues H8, K12, 34-37, and 54-55 each bind substrate; these read TGTT and SG. Residue D60 is the Proton donor/acceptor of the active site. A substrate-binding site is contributed by H87.

The protein belongs to the methylglyoxal synthase family.

The enzyme catalyses dihydroxyacetone phosphate = methylglyoxal + phosphate. Catalyzes the formation of methylglyoxal from dihydroxyacetone phosphate. The sequence is that of Methylglyoxal synthase from Bacillus cereus (strain ATCC 14579 / DSM 31 / CCUG 7414 / JCM 2152 / NBRC 15305 / NCIMB 9373 / NCTC 2599 / NRRL B-3711).